The sequence spans 448 residues: 3-phosphoshikimate 1-carboxyvinyltransferase (448 aa).

3-phosphoshikimate-binding residues include lysine 28, serine 29, and arginine 33. Residue lysine 28 coordinates phosphoenolpyruvate. 2 residues coordinate phosphoenolpyruvate: glycine 100 and arginine 128. The 3-phosphoshikimate site is built by serine 173, glutamine 175, aspartate 326, and lysine 353. Glutamine 175 lines the phosphoenolpyruvate pocket. Aspartate 326 acts as the Proton acceptor in catalysis. Phosphoenolpyruvate is bound by residues arginine 357 and arginine 405.

Belongs to the EPSP synthase family. As to quaternary structure, monomer.

It is found in the cytoplasm. The enzyme catalyses 3-phosphoshikimate + phosphoenolpyruvate = 5-O-(1-carboxyvinyl)-3-phosphoshikimate + phosphate. It functions in the pathway metabolic intermediate biosynthesis; chorismate biosynthesis; chorismate from D-erythrose 4-phosphate and phosphoenolpyruvate: step 6/7. Functionally, catalyzes the transfer of the enolpyruvyl moiety of phosphoenolpyruvate (PEP) to the 5-hydroxyl of shikimate-3-phosphate (S3P) to produce enolpyruvyl shikimate-3-phosphate and inorganic phosphate. The sequence is that of 3-phosphoshikimate 1-carboxyvinyltransferase from Sinorhizobium fredii (strain NBRC 101917 / NGR234).